The primary structure comprises 272 residues: Undecaprenyl-diphosphatase (272 aa).

The next 8 membrane-spanning stretches (helical) occupy residues 5–25, 45–65, 88–108, 115–135, 152–171, 189–209, 221–241, and 251–271; these read YSLF…FLPV, AKTF…VVFW, HLTL…GLAF, LFNP…LLAA, TYRQ…WPGF, YAAS…ASGL, GDLP…LIAI, and ISFV…YWVF.

It belongs to the UppP family.

It is found in the cell inner membrane. It catalyses the reaction di-trans,octa-cis-undecaprenyl diphosphate + H2O = di-trans,octa-cis-undecaprenyl phosphate + phosphate + H(+). In terms of biological role, catalyzes the dephosphorylation of undecaprenyl diphosphate (UPP). Confers resistance to bacitracin. This chain is Undecaprenyl-diphosphatase, found in Yersinia enterocolitica serotype O:8 / biotype 1B (strain NCTC 13174 / 8081).